A 215-amino-acid chain; its full sequence is 7-methyl-GTP pyrophosphatase (215 aa).

The active-site Proton acceptor is the Asp79.

The protein belongs to the Maf family. YceF subfamily. A divalent metal cation is required as a cofactor.

Its subcellular location is the cytoplasm. It carries out the reaction N(7)-methyl-GTP + H2O = N(7)-methyl-GMP + diphosphate + H(+). Its function is as follows. Nucleoside triphosphate pyrophosphatase that hydrolyzes 7-methyl-GTP (m(7)GTP). May have a dual role in cell division arrest and in preventing the incorporation of modified nucleotides into cellular nucleic acids. This chain is 7-methyl-GTP pyrophosphatase, found in Burkholderia thailandensis (strain ATCC 700388 / DSM 13276 / CCUG 48851 / CIP 106301 / E264).